A 166-amino-acid chain; its full sequence is Eukaryotic translation initiation factor 5A (166 aa).

Position 52 is a hypusine (K52). Positions 99 to 125 (DREDPSKPAHLSLMDDEGETRDNLDMP) are disordered.

It belongs to the eIF-5A family. Post-translationally, lys-52 undergoes hypusination, a unique post-translational modification that consists in the addition of a butylamino group from spermidine to lysine side chain, leading to the formation of the unusual amino acid hypusine. eIF-5As are the only known proteins to undergo this modification, which is essential for their function. Hypusination is mediated by the consecutive action of deoxyhypusine synthase DHSc and deoxyhypusine hydroxylase DOHH.

The protein resides in the cytoplasm. Its function is as follows. Translation factor that promotes translation elongation and termination, particularly upon ribosome stalling at specific amino acid sequence contexts. Binds between the exit (E) and peptidyl (P) site of the ribosome and promotes rescue of stalled ribosome: specifically required for efficient translation of polyproline-containing peptides as well as other motifs that stall the ribosome. Acts as a ribosome quality control (RQC) cofactor by joining the RQC complex to facilitate peptidyl transfer during CAT tailing step. Required for cell growth during both bloodstream (BF) and insect procyclic (PF) life cycle stages and for survival of the bloodstream form. In Trypanosoma brucei brucei (strain 927/4 GUTat10.1), this protein is Eukaryotic translation initiation factor 5A.